Here is a 130-residue protein sequence, read N- to C-terminus: Histone H2A type 1 (130 aa).

Residues 1-22 (MSGRGKQGGKARAKAKTRSSRA) form a disordered region. Serine 2 bears the N-acetylserine mark. Phosphoserine; by RPS6KA5 is present on serine 2. A Citrulline; alternate modification is found at arginine 4. Residue arginine 4 is modified to Symmetric dimethylarginine; by PRMT5; alternate. Residue lysine 6 is modified to N6-(2-hydroxyisobutyryl)lysine. Basic residues predominate over residues 7 to 19 (QGGKARAKAKTRS). The residue at position 10 (lysine 10) is an N6-(2-hydroxyisobutyryl)lysine; alternate. An N6-lactoyllysine; alternate modification is found at lysine 10. The residue at position 10 (lysine 10) is an N6-succinyllysine; alternate. Residues lysine 14 and lysine 16 each participate in a glycyl lysine isopeptide (Lys-Gly) (interchain with G-Cter in ubiquitin) cross-link. At lysine 37 the chain carries N6-(2-hydroxyisobutyryl)lysine; alternate. Lysine 37 carries the N6-(beta-hydroxybutyryl)lysine; alternate modification. Lysine 37 carries the N6-crotonyllysine; alternate modification. An N6-(2-hydroxyisobutyryl)lysine mark is found at lysine 75 and lysine 76. At lysine 96 the chain carries N6-(2-hydroxyisobutyryl)lysine; alternate. Position 96 is an N6-succinyllysine; alternate (lysine 96). Lysine 96 is subject to N6-glutaryllysine; alternate. Lysine 100 carries the post-translational modification N6-glutaryllysine. An N5-methylglutamine modification is found at glutamine 105. Lysine 119 is modified (N6-(2-hydroxyisobutyryl)lysine; alternate). 2 positions are modified to N6-crotonyllysine; alternate: lysine 119 and lysine 120. 2 positions are modified to N6-glutaryllysine; alternate: lysine 119 and lysine 120. Lysine 120 is covalently cross-linked (Glycyl lysine isopeptide (Lys-Gly) (interchain with G-Cter in ubiquitin); alternate). Threonine 121 is subject to Phosphothreonine; by DCAF1. Position 126 is an N6-crotonyllysine; alternate (lysine 126). Lysine 126 bears the N6-glutaryllysine; alternate mark.

This sequence belongs to the histone H2A family. The nucleosome is a histone octamer containing two molecules each of H2A, H2B, H3 and H4 assembled in one H3-H4 heterotetramer and two H2A-H2B heterodimers. The octamer wraps approximately 147 bp of DNA. Interacts with VRK1; the interaction is mediated by the nucleosome acidic patch, a cluster of negatively charged residues of H2A and H2B forming a cleft within the nucleosome core. Deiminated on Arg-4 in granulocytes upon calcium entry. In terms of processing, monoubiquitination of Lys-120 (H2AK119Ub) by RING1, TRIM37 and RNF2/RING2 complex gives a specific tag for epigenetic transcriptional repression and participates in X chromosome inactivation of female mammals. It is involved in the initiation of both imprinted and random X inactivation. Ubiquitinated H2A is enriched in inactive X chromosome chromatin. Ubiquitination of H2A functions downstream of methylation of 'Lys-27' of histone H3 (H3K27me). H2AK119Ub by RNF2/RING2 can also be induced by ultraviolet and may be involved in DNA repair. Following DNA double-strand breaks (DSBs), it is ubiquitinated through 'Lys-63' linkage of ubiquitin moieties by the E2 ligase UBE2N and the E3 ligases RNF8 and RNF168, leading to the recruitment of repair proteins to sites of DNA damage. Ubiquitination at Lys-14 and Lys-16 (H2AK13Ub and H2AK15Ub, respectively) in response to DNA damage is initiated by RNF168 that mediates monoubiquitination at these 2 sites, and 'Lys-63'-linked ubiquitin are then conjugated to monoubiquitin; RNF8 is able to extend 'Lys-63'-linked ubiquitin chains in vitro. H2AK119Ub and ionizing radiation-induced 'Lys-63'-linked ubiquitination (H2AK13Ub and H2AK15Ub) are distinct events. Post-translationally, phosphorylation on Ser-2 (H2AS1ph) is enhanced during mitosis. Phosphorylation on Ser-2 by RPS6KA5/MSK1 directly represses transcription. Acetylation of H3 inhibits Ser-2 phosphorylation by RPS6KA5/MSK1. Phosphorylation at Thr-121 (H2AT120ph) by DCAF1 is present in the regulatory region of many tumor suppresor genes and down-regulates their transcription. Symmetric dimethylation on Arg-4 by the PRDM1/PRMT5 complex may play a crucial role in the germ-cell lineage. In terms of processing, glutamine methylation at Gln-105 (H2AQ104me) by FBL is specifically dedicated to polymerase I. It is present at 35S ribosomal DNA locus and impairs binding of the FACT complex. Post-translationally, crotonylation (Kcr) is specifically present in male germ cells and marks testis-specific genes in post-meiotic cells, including X-linked genes that escape sex chromosome inactivation in haploid cells. Crotonylation marks active promoters and enhancers and confers resistance to transcriptional repressors. It is also associated with post-meiotically activated genes on autosomes. Lactylated in macrophages by EP300/P300 by using lactoyl-CoA directly derived from endogenous or exogenous lactate, leading to stimulates gene transcription.

The protein resides in the nucleus. Its subcellular location is the chromosome. Core component of nucleosome. Nucleosomes wrap and compact DNA into chromatin, limiting DNA accessibility to the cellular machineries which require DNA as a template. Histones thereby play a central role in transcription regulation, DNA repair, DNA replication and chromosomal stability. DNA accessibility is regulated via a complex set of post-translational modifications of histones, also called histone code, and nucleosome remodeling. The chain is Histone H2A type 1 from Bos taurus (Bovine).